Reading from the N-terminus, the 254-residue chain is MDLKIGKIETELNNILKKEGALYFVLIDPDEKNYAEVAEKVKDYADAIIIGGSIGITNLDEVTKNIKKITNLPVILFPGNVDGVTKEADAVLFMSLMNSKNTYWNMTAPTLGALTIKKYGLEAIPMAYLGIEPISKTAVGFVGEVNEIPQKKPEIASIYCLSASYFGMRWAYLEAGSGAEFPVSNEMILISKKLSGINLIVGGGIRSPDVAYEKVISGADVIVTGTLTEKNPDAVKEMKEAIKRAGKDKLKNKN.

Mg(2+)-binding residues include Asp28 and Ser53. Sn-glycerol 1-phosphate-binding positions include 172 to 178, 203 to 204, and 225 to 226; these read YLEAGSG, GG, and GT.

It belongs to the GGGP/HepGP synthase family. Group II subfamily. It depends on Mg(2+) as a cofactor.

The protein localises to the cytoplasm. It carries out the reaction sn-glycerol 1-phosphate + (2E,6E,10E)-geranylgeranyl diphosphate = sn-3-O-(geranylgeranyl)glycerol 1-phosphate + diphosphate. It functions in the pathway membrane lipid metabolism; glycerophospholipid metabolism. Prenyltransferase that catalyzes the transfer of the geranylgeranyl moiety of geranylgeranyl diphosphate (GGPP) to the C3 hydroxyl of sn-glycerol-1-phosphate (G1P). This reaction is the first ether-bond-formation step in the biosynthesis of archaeal membrane lipids. The protein is Geranylgeranylglyceryl phosphate synthase of Methanococcus vannielii (strain ATCC 35089 / DSM 1224 / JCM 13029 / OCM 148 / SB).